A 135-amino-acid polypeptide reads, in one-letter code: Probable histone H2A.2 (135 aa).

This sequence belongs to the histone H2A family. The nucleosome is a histone octamer containing two molecules each of H2A, H2B, H3 and H4 assembled in one H3-H4 heterotetramer and two H2A-H2B heterodimers. The octamer wraps approximately 147 bp of DNA.

Its subcellular location is the nucleus. It is found in the chromosome. Functionally, core component of nucleosome. Nucleosomes wrap and compact DNA into chromatin, limiting DNA accessibility to the cellular machineries which require DNA as a template. Histones thereby play a central role in transcription regulation, DNA repair, DNA replication and chromosomal stability. DNA accessibility is regulated via a complex set of post-translational modifications of histones, also called histone code, and nucleosome remodeling. The chain is Probable histone H2A.2 from Oryza sativa subsp. indica (Rice).